We begin with the raw amino-acid sequence, 397 residues long: CCA-adding enzyme (397 aa).

ATP contacts are provided by Gly-27 and Arg-30. CTP-binding residues include Gly-27 and Arg-30. Positions 40 and 42 each coordinate Mg(2+). The ATP site is built by Arg-111, Asp-154, Arg-157, Arg-160, and Arg-163. CTP-binding residues include Arg-111, Asp-154, Arg-157, Arg-160, and Arg-163.

The protein belongs to the tRNA nucleotidyltransferase/poly(A) polymerase family. Bacterial CCA-adding enzyme type 3 subfamily. In terms of assembly, homodimer. Mg(2+) serves as cofactor.

It catalyses the reaction a tRNA precursor + 2 CTP + ATP = a tRNA with a 3' CCA end + 3 diphosphate. It carries out the reaction a tRNA with a 3' CCA end + 2 CTP + ATP = a tRNA with a 3' CCACCA end + 3 diphosphate. Its function is as follows. Catalyzes the addition and repair of the essential 3'-terminal CCA sequence in tRNAs without using a nucleic acid template. Adds these three nucleotides in the order of C, C, and A to the tRNA nucleotide-73, using CTP and ATP as substrates and producing inorganic pyrophosphate. tRNA 3'-terminal CCA addition is required both for tRNA processing and repair. Also involved in tRNA surveillance by mediating tandem CCA addition to generate a CCACCA at the 3' terminus of unstable tRNAs. While stable tRNAs receive only 3'-terminal CCA, unstable tRNAs are marked with CCACCA and rapidly degraded. This chain is CCA-adding enzyme, found in Anoxybacillus flavithermus (strain DSM 21510 / WK1).